Here is a 73-residue protein sequence, read N- to C-terminus: Antitoxin VapB2 (73 aa).

Forms a homodimer, which binds to a toxin homodimer, which then oligomerizes further to a hetero-octamer. When bound to toxin VapC2 the toxin activity is inhibited; 1 antitoxin may suffice to inhibit toxin.

In terms of biological role, antitoxin component of a type II toxin-antitoxin (TA) system. Upon expression in M.smegmatis neutralizes the effect of cognate toxin VapC2. The C-terminal helix of the antitoxin may obstruct the toxin's RNA-binding groove, blocking access to the active sites. Additionally, the C-terminal arginine of the antitoxin may remove Mg(2+) ions from the toxin active sites. The protein is Antitoxin VapB2 (vapB2) of Mycobacterium tuberculosis (strain ATCC 25618 / H37Rv).